The sequence spans 473 residues: Photosystem II CP43 reaction center protein (473 aa).

Positions 1-14 (MKILYSLRRFYHVE) are excised as a propeptide. Residue T15 is modified to N-acetylthreonine. Residue T15 is modified to Phosphothreonine. 5 helical membrane passes run 69 to 93 (LFEV…PHLA), 134 to 155 (LLGP…KDRN), 178 to 200 (KALY…RKIT), 255 to 275 (KPFA…LSYS), and 291 to 312 (WFNN…ASQA). A [CaMn4O5] cluster-binding site is contributed by E367. The helical transmembrane segment at 447–471 (RARAAAAGFEKGIDRDLEPVLYMNP) threads the bilayer.

It belongs to the PsbB/PsbC family. PsbC subfamily. As to quaternary structure, PSII is composed of 1 copy each of membrane proteins PsbA, PsbB, PsbC, PsbD, PsbE, PsbF, PsbH, PsbI, PsbJ, PsbK, PsbL, PsbM, PsbT, PsbX, PsbY, PsbZ, Psb30/Ycf12, at least 3 peripheral proteins of the oxygen-evolving complex and a large number of cofactors. It forms dimeric complexes. Binds multiple chlorophylls and provides some of the ligands for the Ca-4Mn-5O cluster of the oxygen-evolving complex. It may also provide a ligand for a Cl- that is required for oxygen evolution. PSII binds additional chlorophylls, carotenoids and specific lipids. is required as a cofactor. In terms of processing, phosphorylated on threonine residue(s); phosphorylation increases with increasing light levels.

It localises to the plastid. The protein resides in the chloroplast thylakoid membrane. Its function is as follows. One of the components of the core complex of photosystem II (PSII). It binds chlorophyll and helps catalyze the primary light-induced photochemical processes of PSII. PSII is a light-driven water:plastoquinone oxidoreductase, using light energy to abstract electrons from H(2)O, generating O(2) and a proton gradient subsequently used for ATP formation. The chain is Photosystem II CP43 reaction center protein from Secale cereale (Rye).